Here is a 272-residue protein sequence, read N- to C-terminus: 4-hydroxy-tetrahydrodipicolinate reductase (272 aa).

Residues 12 to 17 and Glu38 contribute to the NAD(+) site; that span reads GAAGRM. Arg39 serves as a coordination point for NADP(+). NAD(+) is bound by residues 102–104 and 126–129; these read GTT and SGNM. The active-site Proton donor/acceptor is His160. His161 is a binding site for (S)-2,3,4,5-tetrahydrodipicolinate. Catalysis depends on Lys164, which acts as the Proton donor. A (S)-2,3,4,5-tetrahydrodipicolinate-binding site is contributed by 170–171; that stretch reads GT.

Belongs to the DapB family.

The protein resides in the cytoplasm. The catalysed reaction is (S)-2,3,4,5-tetrahydrodipicolinate + NAD(+) + H2O = (2S,4S)-4-hydroxy-2,3,4,5-tetrahydrodipicolinate + NADH + H(+). The enzyme catalyses (S)-2,3,4,5-tetrahydrodipicolinate + NADP(+) + H2O = (2S,4S)-4-hydroxy-2,3,4,5-tetrahydrodipicolinate + NADPH + H(+). It participates in amino-acid biosynthesis; L-lysine biosynthesis via DAP pathway; (S)-tetrahydrodipicolinate from L-aspartate: step 4/4. Functionally, catalyzes the conversion of 4-hydroxy-tetrahydrodipicolinate (HTPA) to tetrahydrodipicolinate. The sequence is that of 4-hydroxy-tetrahydrodipicolinate reductase from Sinorhizobium medicae (strain WSM419) (Ensifer medicae).